The following is a 633-amino-acid chain: NADPH-dependent diflavin oxidoreductase 1 (633 aa).

Residues 5–149 (CTIIYATESG…EVEKWSQELI (145 aa)) form the Flavodoxin-like domain. Residues 11–16 (TESGTS), 58–61 (STTG), and Asp131 contribute to the FMN site. The FAD-binding FR-type domain occupies 196–442 (TQFYKSKLKV…FIKESGARLP (247 aa)). FAD contacts are provided by residues 377–380 (RPFS) and 412–415 (GLCS). NADP(+)-binding positions include Thr456, 520 to 521 (SR), 528 to 532 (KVYVQ), and Asp565. The interval 580–610 (KNNNNNNNNNNNNNNNNNNNNNNNNNDDENN) is disordered. The span at 581-604 (NNNNNNNNNNNNNNNNNNNNNNNN) shows a compositional bias: low complexity. Trp633 contacts FAD.

This sequence belongs to the NADPH-dependent diflavin oxidoreductase NDOR1 family. It in the N-terminal section; belongs to the flavodoxin family. In the C-terminal section; belongs to the flavoprotein pyridine nucleotide cytochrome reductase family. The cofactor is FAD. It depends on FMN as a cofactor.

It localises to the cytoplasm. The catalysed reaction is 2 oxidized [2Fe-2S]-[protein] + NADPH = 2 reduced [2Fe-2S]-[protein] + NADP(+) + H(+). Functionally, NADPH-dependent reductase which is a central component of the cytosolic iron-sulfur (Fe-S) protein assembly (CIA) machinery. Transfers electrons from NADPH via its FAD and FMN prosthetic groups to the [2Fe-2S] cluster of the anamorsin/DRE2 homolog, another key component of the CIA machinery. In turn, this reduced cluster provides electrons for assembly of cytosolic iron-sulfur cluster proteins. The polypeptide is NADPH-dependent diflavin oxidoreductase 1 (redC) (Dictyostelium discoideum (Social amoeba)).